Consider the following 325-residue polypeptide: tRNA(Ile)-lysidine synthase (325 aa).

Residue 34–39 (SGGADS) coordinates ATP.

Belongs to the tRNA(Ile)-lysidine synthase family.

It localises to the cytoplasm. It catalyses the reaction cytidine(34) in tRNA(Ile2) + L-lysine + ATP = lysidine(34) in tRNA(Ile2) + AMP + diphosphate + H(+). In terms of biological role, ligates lysine onto the cytidine present at position 34 of the AUA codon-specific tRNA(Ile) that contains the anticodon CAU, in an ATP-dependent manner. Cytidine is converted to lysidine, thus changing the amino acid specificity of the tRNA from methionine to isoleucine. This Rhodococcus opacus (strain B4) protein is tRNA(Ile)-lysidine synthase.